Reading from the N-terminus, the 31-residue chain is Cyclotide mech-4 (31 aa).

A cross-link (cyclopeptide (Gly-Asp)) is located at residues 1 to 31 (GSIPCGESCVYIPCISSLLGCSCKSKVCYKD). 3 cysteine pairs are disulfide-bonded: C5/C21, C9/C23, and C14/C28.

In terms of processing, this is a cyclic peptide. Post-translationally, contains 3 disulfide bonds.

In terms of biological role, probably participates in a plant defense mechanism (Potential). Binds to and induces leakage in phospholipd membranes, particularly ones containing 1-palmitoyl-2-oleophosphatidylethanolamine (POPE). The chain is Cyclotide mech-4 from Melicytus chathamicus (Chatham Island mahoe).